The sequence spans 485 residues: MASIAHCSGGLVGAGNFDFILGGSDPVGRHGLMELQPWHWCCLPLEGRTGSEIFSQLFGHQGIATLLESPYPASPDHPHLGRYSLCAGQPRKGRLWTPKPEEIFSFLNQLCPCNHDVNLTKNIPEHLPFHGGWLGWLGYDTAWAIEKLPYSKADDLPFPVAYWYEPENFVILDHQEQLLWLATTDQEKIKFFQTQLADKINSVSSPQVPPLNLTYTTDQDQYETMVNQAKQYIKAGDIFQANLTLRFIAKTEQKLNSWQVYQHLQTINPSPFASYWRSPWGDVVSCSPERLVKLEGNVAQTRPIAGTRARGKNLAEDEQLLQELLVNTKELAEHIMLVDLERNDLGRVCTWGTVEVDELLAIERYSHVSHLVSNVKGILQPDKTGVDLVKALFPGGTITGCPKIRCLEIIEELEPVRRSLFYGSCGYWDQRGNLDLNILIRTLLFTSGQVTGQVGAGIVADSDPAKEWLESLQKAKALLAALEGL.

L-tryptophan contacts are provided by residues Ser-69 and 271–273; that span reads PFA. 306-307 is a chorismate binding site; the sequence is GT. Position 333 (Glu-333) interacts with Mg(2+). Chorismate contacts are provided by residues Arg-441, 455 to 457, and Gly-457; that span reads GAG. Glu-470 lines the Mg(2+) pocket.

This sequence belongs to the anthranilate synthase component I family. Tetramer of two components I and two components II. The cofactor is Mg(2+).

The enzyme catalyses chorismate + L-glutamine = anthranilate + pyruvate + L-glutamate + H(+). Its pathway is amino-acid biosynthesis; L-tryptophan biosynthesis; L-tryptophan from chorismate: step 1/5. The polypeptide is Anthranilate synthase component I-like protein (trpE2) (Synechocystis sp. (strain ATCC 27184 / PCC 6803 / Kazusa)).